The chain runs to 427 residues: BTB/POZ domain-containing protein KCTD16 (427 aa).

A BTB domain is found at 25-98; the sequence is EVIELNVGGQ…LRDRQVVLPD (74 aa). Tyr-112 is modified (phosphotyrosine). 4 positions are modified to phosphoserine: Ser-130, Ser-137, Ser-143, and Ser-146.

As to quaternary structure, homopentamer; forms an open pentamer. In contrast to other BTB domain-containing proteins, does not interact with CUL3. Interacts as a tetramer with GABBR1 and GABBR2. In terms of tissue distribution, expressed in the brain, mainly in the hippocampus.

It is found in the presynaptic cell membrane. The protein resides in the postsynaptic cell membrane. Its function is as follows. Auxiliary subunit of GABA-B receptors that determine the pharmacology and kinetics of the receptor response. Increases agonist potency and markedly alter the G-protein signaling of the receptors by accelerating onset and promoting desensitization. This chain is BTB/POZ domain-containing protein KCTD16 (Kctd16), found in Mus musculus (Mouse).